Here is a 299-residue protein sequence, read N- to C-terminus: MGDTTKDDGSSQSKAVRGEKRAFFFRKWTRIDIARASAVGAVHLLCLLAPFNYKWEALRFGVILAIVTSLSITFSYHRNLTHKSFKLPKWLEYPFAYSALFALQGHPIDWVSTHRFHHQFTDSDRDPHSPIEGFWFSHVFWIFDTSYIREKCGGRDNVMDLKQQWFYRFLRNTIGLHILTFWTLVYLWGGLPYLTCGVGVGGTIGYNGTWLINSACHIWGSRAWNTKDTSRNIWWLGPFTMGESWHNNHHAFEASARHGLEWYQVDLTWYLICFFQALGLATDVKLPTDAQKRKLAFAR.

The next 2 membrane-spanning stretches (helical) occupy residues 31–51 (IDIARASAVGAVHLLCLLAPF) and 55–75 (WEALRFGVILAIVTSLSITFS). Positions 77–82 (HRNLTH) match the Histidine box-1 motif. Residues 114–118 (HRFHH) carry the Histidine box-2 motif. The next 2 membrane-spanning stretches (helical) occupy residues 174-194 (IGLHILTFWTLVYLWGGLPYL) and 198-218 (VGVGGTIGYNGTWLINSACHI). The Histidine box-3 motif lies at 246–250 (HNNHH). A helical transmembrane segment spans residues 262-282 (WYQVDLTWYLICFFQALGLAT).

This sequence belongs to the fatty acid desaturase type 1 family. Fe cation is required as a cofactor.

It is found in the endoplasmic reticulum membrane. It functions in the pathway lipid metabolism; polyunsaturated fatty acid biosynthesis. The sequence is that of Delta-9 desaturase-like 1 protein from Arabidopsis thaliana (Mouse-ear cress).